Consider the following 417-residue polypeptide: DNA primase small subunit (417 aa).

An N-acetylmethionine modification is found at M1. Catalysis depends on residues E44, D109, and D111. D109 and D111 together coordinate Mg(2+). Mn(2+) contacts are provided by D109 and D111. Residue 109–111 (DID) coordinates a ribonucleoside 5'-triphosphate. Residues C121, C122, C128, and C131 each coordinate Zn(2+). The Zinc knuckle motif signature appears at 121-131 (CCSSADICSKC). 160–166 (SGRRGVH) is a binding site for a ribonucleoside 5'-triphosphate. Mg(2+) is bound at residue D305. D305 contributes to the Mn(2+) binding site. A ribonucleoside 5'-triphosphate-binding positions include 314-317 (HLLK) and H323.

It belongs to the eukaryotic-type primase small subunit family. In terms of assembly, heterodimer of a catalytic subunit PRIM1 and a regulatory subunit PRIM2, also known as the DNA primase complex. Interacts with PRIM2/p58 (via C-terminus). Component of the alpha DNA polymerase complex (also known as the alpha DNA polymerase-primase complex) consisting of four subunits: the catalytic subunit POLA1, the regulatory subunit POLA2, and the primase complex subunits PRIM1 and PRIM2 respectively. Within the complex, POLA1 directly interacts with PRIM2. The cofactor is Mg(2+). It depends on Mn(2+) as a cofactor.

The enzyme catalyses ssDNA + n NTP = ssDNA/pppN(pN)n-1 hybrid + (n-1) diphosphate.. Its activity is regulated as follows. The presence of the regulatory subunit PRIM2/p58 accelerates the kinetics of initiation and primer extension. Catalytic subunit of the DNA primase complex and component of the DNA polymerase alpha complex (also known as the alpha DNA polymerase-primase complex) which play an essential role in the initiation of DNA synthesis. During the S phase of the cell cycle, the DNA polymerase alpha complex (composed of a catalytic subunit POLA1, an accessory subunit POLA2 and two primase subunits, the catalytic subunit PRIM1 and the regulatory subunit PRIM2) is recruited to DNA at the replicative forks via direct interactions with MCM10 and WDHD1. The primase subunit of the polymerase alpha complex initiates DNA synthesis by oligomerising short RNA primers on both leading and lagging strands. These primers are initially extended by the polymerase alpha catalytic subunit and subsequently transferred to polymerase delta and polymerase epsilon for processive synthesis on the lagging and leading strand, respectively. In the primase complex, both subunits are necessary for the initial di-nucleotide formation, but the extension of the primer depends only on the catalytic subunit. Can add both ribo- and deoxynucleotides during elongation of the primers. Synthesizes 9-mer RNA primers (also known as the 'unit length' RNA primers). Incorporates only ribonucleotides in the presence of ribo- and deoxy-nucleotide triphosphates (rNTPs, dNTPs). Requires template thymine or cytidine to start the RNA primer synthesis, with an adenine or guanine at its 5'-end. Binds single stranded DNA. The sequence is that of DNA primase small subunit (Prim1) from Mus musculus (Mouse).